We begin with the raw amino-acid sequence, 217 residues long: Protein DJ-1alpha (217 aa).

Cys-133 (nucleophile) is an active-site residue. Cys-133 carries the post-translational modification Cysteine sulfinic acid (-SO2H); alternate.

In terms of tissue distribution, expressed in testis (at protein level).

The protein localises to the cytoplasm. The protein resides in the nucleus. It localises to the mitochondrion. In terms of biological role, plays an important role in cell protection against oxidative stress and cell death acting as oxidative stress sensor. Does not play a role in methylglyoxal detoxification. In Drosophila melanogaster (Fruit fly), this protein is Protein DJ-1alpha.